A 277-amino-acid polypeptide reads, in one-letter code: MRQTAQEDASPAPMQRAHGTGRIEAKLREGRTRLERLYQEGCCKIRLPRSHGGAMEAVLINTSGGLTGGDRIDWKADALAGSKLVVTTQACERIYRSTGDDARVSTALRVGPGAHVDWLPQETILFEGSRLHRSLRVDLEDNATFTAVEAVLLGREAMGETARKAHLRDRWRIYRDGKLVHAEETRLAGEEFEREGISLLAGNNAFATILAIGPDAEEKLTALRSILGPSVHAAASAIGERLVLRVVAPSGLMLRRTIIPAIALLSGAGALPRLWSI.

Residues 1–20 (MRQTAQEDASPAPMQRAHGT) are disordered.

The protein belongs to the UreD family. As to quaternary structure, ureD, UreF and UreG form a complex that acts as a GTP-hydrolysis-dependent molecular chaperone, activating the urease apoprotein by helping to assemble the nickel containing metallocenter of UreC. The UreE protein probably delivers the nickel.

The protein localises to the cytoplasm. Its function is as follows. Required for maturation of urease via the functional incorporation of the urease nickel metallocenter. The chain is Urease accessory protein UreD from Chelativorans sp. (strain BNC1).